Consider the following 353-residue polypeptide: Elongation factor Ts (353 aa).

The tract at residues 80–83 is involved in Mg(2+) ion dislocation from EF-Tu; the sequence is TDFV.

Belongs to the EF-Ts family.

Its subcellular location is the cytoplasm. In terms of biological role, associates with the EF-Tu.GDP complex and induces the exchange of GDP to GTP. It remains bound to the aminoacyl-tRNA.EF-Tu.GTP complex up to the GTP hydrolysis stage on the ribosome. The polypeptide is Elongation factor Ts (Sulfurovum sp. (strain NBC37-1)).